A 209-amino-acid chain; its full sequence is Uracil phosphoribosyltransferase (209 aa).

Residues Arg79, Arg104, and 131 to 139 each bind 5-phospho-alpha-D-ribose 1-diphosphate; that span reads DPMLATGHS. Residues Ile194 and 199 to 201 contribute to the uracil site; that span reads GDA. 5-phospho-alpha-D-ribose 1-diphosphate is bound at residue Asp200.

It belongs to the UPRTase family. The cofactor is Mg(2+).

It carries out the reaction UMP + diphosphate = 5-phospho-alpha-D-ribose 1-diphosphate + uracil. Its pathway is pyrimidine metabolism; UMP biosynthesis via salvage pathway; UMP from uracil: step 1/1. Its activity is regulated as follows. Allosterically activated by GTP. In terms of biological role, catalyzes the conversion of uracil and 5-phospho-alpha-D-ribose 1-diphosphate (PRPP) to UMP and diphosphate. This chain is Uracil phosphoribosyltransferase, found in Caulobacter vibrioides (strain ATCC 19089 / CIP 103742 / CB 15) (Caulobacter crescentus).